The primary structure comprises 218 residues: MYDRWFSQQELQVLPFADEDEQRNQTWLELVGEAQQLMANAARQMSRGRLRWQPAGWSSWSRIHRHAEFLTRLNEMHAAEPQMREQTGVTPEMIDFITRAFAESKLAIWARYLNAEELAFTRQHYFDRLMEWPALVADLHRACREKRDRPPRKVSSWRSAAWRCSSLTRVKMRRRSRISLCHAQVPALMKGTWMTSEVLSWLQQAIGVMMRQAQGPRE.

The protein resides in the periplasm. In terms of biological role, albicidin resistance protein binds to form a complex without antibiotic activity but without catalyzing any further chemical modifications to albicidin. The protein is Albicidin resistance protein of Klebsiella oxytoca.